We begin with the raw amino-acid sequence, 697 residues long: MSMFNIIRKEFQFGQHQVVLETGRVARQANTVLVTMGGVTVLVAVVAQPKAKAGQDFFPLTVNYQEKQYAAGRIPGGYGKREGRASEAETLISRLIDRPIRPLFPEGYFNEIQITATVVSSDKTMDADIAAMLGASAALSIAGTPFRGPIGGARVGLINGEYVLNPNFEQLAQSDLDLVVAGTESAVLMVESEAKELSEDQMLGAVLFGHDEMQIAVQAIKEFAAAAGAVESTWVAPTKNETLLEQLKAAFEAKISEAYTIAVKQDRYTALDALYAEAVAQFVPENDETGIADEVNELFEDLKYRTVRDNILSGKPRIDGRDTKTVRAIDVQVGVLDRAHGSALFTRGETQALVTTTLGNTRDALMVDTLAGTKTDNFMLHYNFPAYSVGETGRESGPKRREIGHGRLARRGVQAVLPAADRFPYVIRIVSDITESNGSSSMASVCGASLSLMDAGVPLKAPVAGIAMGLVKEGERFAVLSDILGDEDHLGDMDFKVAGSANGITALQMDIKIEGITEEIMEVALNQAYAGRMHILNEMNKVISRARAEISAHAPTFEVITINPDKIRDVIGKGGATIRQITEETKAAIDIEDNGTVRVFGETKAAARAAIAKIQALTAEVEPGKIYDGKVIRIVEFGAFVNIMPGTDGLLHISQISNERVANVSDVLKEGQDVKVQVADVDNRGRIKLSMKDIEQA.

2 residues coordinate Mg(2+): D488 and D494. The KH domain occupies 555-614 (PTFEVITINPDKIRDVIGKGGATIRQITEETKAAIDIEDNGTVRVFGETKAAARAAIAKI). The region spanning 624-692 (GKIYDGKVIR…NRGRIKLSMK (69 aa)) is the S1 motif domain.

This sequence belongs to the polyribonucleotide nucleotidyltransferase family. Component of the RNA degradosome, which is a multiprotein complex involved in RNA processing and mRNA degradation. Mg(2+) serves as cofactor.

It is found in the cytoplasm. The catalysed reaction is RNA(n+1) + phosphate = RNA(n) + a ribonucleoside 5'-diphosphate. Functionally, involved in mRNA degradation. Catalyzes the phosphorolysis of single-stranded polyribonucleotides processively in the 3'- to 5'-direction. This is Polyribonucleotide nucleotidyltransferase from Acinetobacter baylyi (strain ATCC 33305 / BD413 / ADP1).